The following is a 450-amino-acid chain: tRNA modification GTPase MnmE (450 aa).

(6S)-5-formyl-5,6,7,8-tetrahydrofolate is bound by residues arginine 25, glutamate 86, and arginine 126. Positions 221-373 (GLRVALVGRP…LVQALLERCG (153 aa)) constitute a TrmE-type G domain. Asparagine 231 contacts K(+). GTP-binding positions include 231-236 (NVGKSS), 250-256 (TELPGTT), 275-278 (DTAG), and 336-339 (NKAD). Serine 235 is a binding site for Mg(2+). The K(+) site is built by threonine 250, leucine 252, and threonine 255. A Mg(2+)-binding site is contributed by threonine 256. Lysine 450 contributes to the (6S)-5-formyl-5,6,7,8-tetrahydrofolate binding site.

This sequence belongs to the TRAFAC class TrmE-Era-EngA-EngB-Septin-like GTPase superfamily. TrmE GTPase family. In terms of assembly, homodimer. Heterotetramer of two MnmE and two MnmG subunits. Requires K(+) as cofactor.

The protein localises to the cytoplasm. Exhibits a very high intrinsic GTPase hydrolysis rate. Involved in the addition of a carboxymethylaminomethyl (cmnm) group at the wobble position (U34) of certain tRNAs, forming tRNA-cmnm(5)s(2)U34. The protein is tRNA modification GTPase MnmE of Parasynechococcus marenigrum (strain WH8102).